We begin with the raw amino-acid sequence, 236 residues long: Lectin CPL (236 aa).

Positions 8 and 10 each coordinate Mn(2+). Asp10, Tyr12, Asn14, and Asp19 together coordinate Ca(2+). Asn14 is an a carbohydrate binding site. 2 residues coordinate Mn(2+): Asp19 and His24. A carbohydrate-binding positions include 99–100 (VY), Asp207, and Arg227.

This sequence belongs to the leguminous lectin family. As to quaternary structure, homotetramer; dimer of dimers. Post-translationally, concanavalin A-like lectins of the Diocleinae subtribe undergo proteolytic processing referred to as circular permutation. The propeptide is split into an N-terminal and a C-terminal part, the gamma and beta chain, respectively. These are then religated in beta-gamma order to form the mature alpha chain. The beta and gamma chains can often be detected in cell extracts. Residues 1-118 of the mature chain, as displayed here, probably constitute the beta chain in the propeptide, residues 119-236 the gamma chain.

Functionally, D-mannose/D-glucose-binding lectin that also binds derivative alpha-methyl-D-mannppyranoside. Has hemagglutinating activity towards rabbit erythrocytes. The protein is Lectin CPL of Bionia pedicellata (Camptosema pedicellatum).